Consider the following 464-residue polypeptide: Neuronal acetylcholine receptor subunit beta-3 (464 aa).

A signal peptide spans Met1–Ser30. Topologically, residues Val31–Leu238 are extracellular. N-linked (GlcNAc...) asparagine glycans are attached at residues Asn55 and Asn172. Cys159 and Cys173 are oxidised to a cystine. 3 helical membrane-spanning segments follow: residues Pro239 to Leu263, Leu271 to Ile288, and Tyr305 to Val326. Residues His327 to Arg434 are Cytoplasmic-facing. A helical transmembrane segment spans residues Ile435 to Ile453.

The protein belongs to the ligand-gated ion channel (TC 1.A.9) family. Acetylcholine receptor (TC 1.A.9.1) subfamily. Beta-3/CHRNB3 sub-subfamily. As to quaternary structure, neuronal AChR seems to be composed of two different type of subunits: alpha and beta. CHRNB3/beta-3 subunit is only able to form functional nAChRs when co-assembled with another beta subunit. Participates in pentameric assemblies along with CHRNA4/alpha-4 and CHRNB2/beta-2 subunits and with CHRNA6/alpha-6 as well, forming stoichiometries such as (CHRNA3:CHRNB4)2:CHRNB3, (CHRNA4:CHRNB2)2:CHRNB3 or (CHRNA6:CHRNB2)2:CHRNB3.

The protein resides in the synaptic cell membrane. It is found in the cell membrane. The catalysed reaction is Ca(2+)(in) = Ca(2+)(out). It catalyses the reaction K(+)(in) = K(+)(out). It carries out the reaction Na(+)(in) = Na(+)(out). Activated by a myriad of ligands such as acetylcholine, cytisine, nicotine, choline and epibatidine. Component of neuronal acetylcholine receptors (nAChRs) that function as pentameric, ligand-gated cation channels with high calcium permeability among other activities. nAChRs are excitatory neurotrasnmitter receptors formed by a collection of nAChR subunits known to mediate synaptic transmission in the nervous system and the neuromuscular junction. Each nAchR subunit confers differential attributes to channel properties, including activation, deactivation and desensitization kinetics, pH sensitivity, cation permeability, and binding to allosteric modulators. Has an accessory rather than functional role and is only able to form functional nAChRs when co-assembled with another beta subunit. Participates in pentameric assemblies along with CHRNA3, CHRNA4, CHRNA6, CHRNB2 and CHRNB4. Modulates receptor assembly and increases receptor sensitivity to nicotine when associated with CHRNB2, CHRNA4 and/or CHRNA6 as well as CHRNA3 and CHRNB4. Seems to play a role in nicotine addiction. This Rattus norvegicus (Rat) protein is Neuronal acetylcholine receptor subunit beta-3 (Chrnb3).